The following is a 103-amino-acid chain: Potassium voltage-gated channel subfamily E member 3 (103 aa).

N-linked (GlcNAc...) asparagine glycans are attached at residues Asn5, Asn22, and Asn41. Residues 30–52 (LCRPGPGPGPDNQTEDRRASLPG) form a disordered region. A helical membrane pass occupies residues 57-77 (SYMYILFVMFLFAVTVGSLIL). The tract at residues 68–79 (FAVTVGSLILGY) is interaction with KCNQ1. Over 78 to 103 (GYTRSRKVDKRSDPYHVYIKNRVSMI) the chain is Cytoplasmic.

Belongs to the potassium channel KCNE family. As to quaternary structure, interacts with KCNB1. Interacts with KCNC2. Associates with KCNC4/Kv3.4. Interacts with KCNQ1; associates with a KCNQ1:KCNE3 stoichiometry of 4:4; produces a current with nearly instantaneous activation with a linear current-voltage relationship and alters membrane raft localization; affects KCNQ1 structure and gating properties.

The protein localises to the cell membrane. It localises to the cytoplasm. The protein resides in the perikaryon. It is found in the cell projection. Its subcellular location is the dendrite. The protein localises to the membrane raft. Ancillary protein that functions as a regulatory subunit of the voltage-gated potassium (Kv) channel complex composed of pore-forming and potassium-conducting alpha subunits and of regulatory beta subunits. KCNE3 beta subunit modulates the gating kinetics and enhances stability of the channel complex. Alters the gating of the delayed rectifier Kv channel containing KCNB1 alpha subunit. Associates with KCNC4/Kv3.4 alpha subunit to form the subthreshold Kv channel in skeletal muscle and to establish the resting membrane potential (RMP) in muscle cells. Association with KCNQ1/KCLQT1 alpha subunit may form the intestinal cAMP-stimulated potassium channel involved in chloride secretion that produces a current with nearly instantaneous activation with a linear current-voltage relationship. This Mus musculus (Mouse) protein is Potassium voltage-gated channel subfamily E member 3.